Here is a 97-residue protein sequence, read N- to C-terminus: Type VII secretion system extracellular protein A (97 aa).

A coiled-coil region spans residues Lys61–Asn93.

This sequence belongs to the WXG100 family. sagEsxA-like subfamily. In terms of assembly, forms both homodimers and heterodimers with EsxC.

It is found in the secreted. Functionally, virulence factor that is important for the establishment of infection in the host. EsxA is required for EsxB synthesis as well as secretion. Modulates host cell apoptotic pathways and mediates together with EsxB the release of S.aureus from the host cell. By acting on apoptosis, plays a role in the modulation of dendritic cell-mediated immunity. The sequence is that of Type VII secretion system extracellular protein A from Staphylococcus aureus (strain USA300).